A 1749-amino-acid polypeptide reads, in one-letter code: Transposon Ty1-NL2 Gag-Pol polyprotein (1749 aa).

Polar residues-rich tracts occupy residues Met1–Ser23, Thr48–Ser60, Ser71–Asn97, and Gln129–Phe152. 3 disordered regions span residues Met1 to Asn97, Gln129 to Pro171, and Gly352 to Thr421. The segment covering Thr153–Thr165 has biased composition (low complexity). The interval Asn299–His401 is RNA-binding. The span at Asn402–Ser418 shows a compositional bias: low complexity. Catalysis depends on Asp461, which acts as the For protease activity; shared with dimeric partner. The segment at Asn583 to Cys640 is integrase-type zinc finger-like. The region spanning Asn660 to Pro835 is the Integrase catalytic domain. 2 residues coordinate Mg(2+): Asp671 and Asp736. The segment at Pro945–Tyr1166 is disordered. Low complexity predominate over residues Ser954–Thr963. The segment covering Ser999–Thr1009 has biased composition (polar residues). The segment covering Glu1032 to Ser1047 has biased composition (basic and acidic residues). Composition is skewed to polar residues over residues Tyr1048–Glu1076 and Ser1089–Leu1100. The short motif at Lys1172 to Arg1206 is the Bipartite nuclear localization signal element. In terms of domain architecture, Reverse transcriptase Ty1/copia-type spans Asn1332 to Gln1470. Asp1340, Asp1421, Asp1422, Asp1604, Glu1646, and Asp1679 together coordinate Mg(2+). Residues Asp1604–Lys1746 form the RNase H Ty1/copia-type domain.

The capsid protein forms a homotrimer, from which the VLPs are assembled. The protease is a homodimer, whose active site consists of two apposed aspartic acid residues. Post-translationally, initially, virus-like particles (VLPs) are composed of the structural unprocessed proteins Gag and Gag-Pol, and also contain the host initiator methionine tRNA (tRNA(i)-Met) which serves as a primer for minus-strand DNA synthesis, and a dimer of genomic Ty RNA. Processing of the polyproteins occurs within the particle and proceeds by an ordered pathway, called maturation. First, the protease (PR) is released by autocatalytic cleavage of the Gag-Pol polyprotein yielding capsid protein p45 and a Pol-p154 precursor protein. This cleavage is a prerequisite for subsequent processing of Pol-p154 at the remaining sites to release the mature structural and catalytic proteins. Maturation takes place prior to the RT reaction and is required to produce transposition-competent VLPs.

Its subcellular location is the cytoplasm. The protein localises to the nucleus. It carries out the reaction DNA(n) + a 2'-deoxyribonucleoside 5'-triphosphate = DNA(n+1) + diphosphate. It catalyses the reaction Endonucleolytic cleavage to 5'-phosphomonoester.. Functionally, capsid protein (CA) is the structural component of the virus-like particle (VLP), forming the shell that encapsulates the retrotransposons dimeric RNA genome. The particles are assembled from trimer-clustered units and there are holes in the capsid shells that allow for the diffusion of macromolecules. CA also has nucleocapsid-like chaperone activity, promoting primer tRNA(i)-Met annealing to the multipartite primer-binding site (PBS), dimerization of Ty1 RNA and initiation of reverse transcription. The aspartyl protease (PR) mediates the proteolytic cleavages of the Gag and Gag-Pol polyproteins after assembly of the VLP. In terms of biological role, reverse transcriptase/ribonuclease H (RT) is a multifunctional enzyme that catalyzes the conversion of the retro-elements RNA genome into dsDNA within the VLP. The enzyme displays a DNA polymerase activity that can copy either DNA or RNA templates, and a ribonuclease H (RNase H) activity that cleaves the RNA strand of RNA-DNA heteroduplexes during plus-strand synthesis and hydrolyzes RNA primers. The conversion leads to a linear dsDNA copy of the retrotransposon that includes long terminal repeats (LTRs) at both ends. Its function is as follows. Integrase (IN) targets the VLP to the nucleus, where a subparticle preintegration complex (PIC) containing at least integrase and the newly synthesized dsDNA copy of the retrotransposon must transit the nuclear membrane. Once in the nucleus, integrase performs the integration of the dsDNA into the host genome. The protein is Transposon Ty1-NL2 Gag-Pol polyprotein (TY1B-NL2) of Saccharomyces cerevisiae (strain ATCC 204508 / S288c) (Baker's yeast).